The following is an 82-amino-acid chain: Ice-structuring protein A (82 aa).

Residues 1-23 (MALSLFTVGQLIFLFWTMRITEA) form the signal peptide. A propeptide spans 24-44 (SPDPAAKAAPAAAAAPAAAAP) (removed by a dipeptidylpeptidase). Position 81 is an arginine amide (arginine 81).

This sequence belongs to the type-I AFP family. As to expression, detected in liver and in blood serum (at protein level).

Its subcellular location is the secreted. In terms of biological role, contributes to protect fish blood from freezing at subzero sea water temperatures. Lowers the blood freezing point. Binds to nascent ice crystals and prevents further growth. This is Ice-structuring protein A from Pseudopleuronectes americanus (Winter flounder).